Consider the following 567-residue polypeptide: uncharacterized protein (567 aa).

Residues 1-26 (MPSEKATTRHLPGAVETLSPRTGRRP) are disordered. 6 consecutive transmembrane segments (helical) span residues 57-77 (AILVTNVIGLIVGAMLLTVAF), 90-110 (VSFGIVPGYCVLAFILGTYWL), 142-162 (VALAVLFLWGAAAALWTIIYG), 173-193 (LFSMGVIGVVAATSCYLLTEF), 221-241 (MLVWLLCSGVPNVGVALTAIF), and 257-277 (VLILWAPLLIFGFILMWILAW). One can recognise an HAMP domain in the interval 277–329 (WLTATPVRVVREALNRVEQGDLSGDLVVFDGTELGELQRGFNRMVEGLRERER). The Guanylate cyclase domain occupies 361–485 (AVVFVDIVGS…EPVNEAARLC (125 aa)).

The protein belongs to the adenylyl cyclase class-3 family.

It localises to the cell membrane. This is an uncharacterized protein from Mycobacterium bovis (strain ATCC BAA-935 / AF2122/97).